Here is a 325-residue protein sequence, read N- to C-terminus: uncharacterized protein (325 aa).

The signal sequence occupies residues M1 to A26. Residues G41–H60 show a composition bias toward polar residues. Disordered stretches follow at residues G41 to W110 and G147 to K189. Residues G147–P157 are compositionally biased toward low complexity.

Binds to numerous extracellular matrix proteins. Expressed in skin and tonsils.

Its subcellular location is the secreted. The protein resides in the extracellular space. The protein localises to the extracellular matrix. This is an uncharacterized protein from Homo sapiens (Human).